The sequence spans 222 residues: UPF0758 protein Cag_1513 (222 aa).

Residues 100 to 222 enclose the MPN domain; sequence KIMAAGDVFE…WYSFRERGLL (123 aa). Residues histidine 171, histidine 173, and aspartate 184 each contribute to the Zn(2+) site. The JAMM motif motif lies at 171-184; that stretch reads HNHPSGDVNPSNAD.

The protein belongs to the UPF0758 family.

The sequence is that of UPF0758 protein Cag_1513 from Chlorobium chlorochromatii (strain CaD3).